The sequence spans 273 residues: XIAP-associated factor 1 (273 aa).

A TRAF-type zinc finger spans residues leucine 22–aspartate 80. The segment at glycine 181–proline 228 is disordered.

Interacts with BIRC1, BIRC2, BIRC3, BIRC4, BIRC7 and BIRC8. Part of an complex consisting of BIRC4, XAF1 and BIRC5; the complex formation requires IFN-beta stimulation. Interacts with RNF114, the interaction increases XAF1 stability and proapoptotic effects, and may regulate IFN signaling.

The protein resides in the cytoplasm. It is found in the nucleus. The protein localises to the mitochondrion. In terms of biological role, seems to function as a negative regulator of members of the IAP (inhibitor of apoptosis protein) family. Inhibits anti-caspase activity of BIRC4. Induces cleavage and inactivation of BIRC4 independent of caspase activation. Mediates TNF-alpha-induced apoptosis and is involved in apoptosis in trophoblast cells. May inhibit BIRC4 indirectly by activating the mitochondrial apoptosis pathway. After translocation to mitochondria, promotes translocation of BAX to mitochondria and cytochrome c release from mitochondria. Seems to promote the redistribution of BIRC4 from the cytoplasm to the nucleus, probably independent of BIRC4 inactivation which seems to occur in the cytoplasm. The BIRC4-XAF1 complex mediates down-regulation of BIRC5/survivin; the process requires the E3 ligase activity of BIRC4. Seems to be involved in cellular sensitivity to the proapoptotic actions of TRAIL. May be a tumor suppressor by mediating apoptosis resistance of cancer cells. This Mus musculus (Mouse) protein is XIAP-associated factor 1 (Xaf1).